Here is a 213-residue protein sequence, read N- to C-terminus: Adenylate kinase (213 aa).

Residue 10 to 15 coordinates ATP; it reads GAGKGT. Residues 30–59 are NMP; the sequence is STGDMFRAAMANQTEMGILAKSYIDKGDLV. AMP-binding positions include Thr-31, Arg-36, 57 to 59, 86 to 89, and Gln-93; these read DLV and GYPR. Positions 127-160 are LID; sequence GRIIHKETGETFHKVFNPPVGDYKEEDFYQREDD. ATP contacts are provided by residues Arg-128 and 137–138; that span reads TF. The AMP site is built by Arg-157 and Arg-168. Gln-196 serves as a coordination point for ATP.

This sequence belongs to the adenylate kinase family. In terms of assembly, monomer.

The protein resides in the cytoplasm. The catalysed reaction is AMP + ATP = 2 ADP. It functions in the pathway purine metabolism; AMP biosynthesis via salvage pathway; AMP from ADP: step 1/1. Catalyzes the reversible transfer of the terminal phosphate group between ATP and AMP. Plays an important role in cellular energy homeostasis and in adenine nucleotide metabolism. This Streptococcus suis (strain 98HAH33) protein is Adenylate kinase.